Consider the following 174-residue polypeptide: Chorismate pyruvate-lyase (174 aa).

Positions 36, 78, 116, and 157 each coordinate substrate.

It belongs to the UbiC family. In terms of assembly, monomer.

Its subcellular location is the cytoplasm. It carries out the reaction chorismate = 4-hydroxybenzoate + pyruvate. The protein operates within cofactor biosynthesis; ubiquinone biosynthesis. Removes the pyruvyl group from chorismate, with concomitant aromatization of the ring, to provide 4-hydroxybenzoate (4HB) for the ubiquinone pathway. The sequence is that of Chorismate pyruvate-lyase from Yersinia pestis bv. Antiqua (strain Angola).